The following is a 378-amino-acid chain: Heme chaperone HemW (378 aa).

The Radical SAM core domain occupies 1–237 (MVKLPPLSLY…LTAAGYQQYE (237 aa)). Residue tyrosine 10 coordinates S-adenosyl-L-methionine. [4Fe-4S] cluster is bound by residues cysteine 16, cysteine 20, and cysteine 23. S-adenosyl-L-methionine contacts are provided by residues glycine 66, 67–68 (GT), glutamate 99, glutamine 126, arginine 138, and aspartate 163.

It belongs to the anaerobic coproporphyrinogen-III oxidase family. HemW subfamily. As to quaternary structure, binding of the [4Fe-4S] cofactor promotes dimerization. It depends on [4Fe-4S] cluster as a cofactor.

The protein resides in the cytoplasm. Its function is as follows. Probably acts as a heme chaperone, transferring heme to the NarI subunit of the respiratory enzyme nitrate reductase; transfer may be stimulated by NADH. Binds one molecule of heme per monomer, possibly covalently. Heme binding is not affected by either [4Fe-4S] or S-adenosyl-L-methionine (SAM)-binding. Does not have coproporphyrinogen III dehydrogenase activity in vitro. Binds 1 [4Fe-4S] cluster. The cluster is coordinated with 3 cysteines and an exchangeable S-adenosyl-L-methionine. The chain is Heme chaperone HemW from Escherichia coli (strain K12).